Reading from the N-terminus, the 65-residue chain is Large ribosomal subunit protein bL35 (65 aa).

It belongs to the bacterial ribosomal protein bL35 family.

In Prochlorococcus marinus (strain MIT 9313), this protein is Large ribosomal subunit protein bL35.